A 226-amino-acid polypeptide reads, in one-letter code: Enolase-phosphatase E1 (226 aa).

It belongs to the HAD-like hydrolase superfamily. MasA/MtnC family. In terms of assembly, monomer. It depends on Mg(2+) as a cofactor.

It catalyses the reaction 5-methylsulfanyl-2,3-dioxopentyl phosphate + H2O = 1,2-dihydroxy-5-(methylsulfanyl)pent-1-en-3-one + phosphate. It participates in amino-acid biosynthesis; L-methionine biosynthesis via salvage pathway; L-methionine from S-methyl-5-thio-alpha-D-ribose 1-phosphate: step 3/6. The protein operates within amino-acid biosynthesis; L-methionine biosynthesis via salvage pathway; L-methionine from S-methyl-5-thio-alpha-D-ribose 1-phosphate: step 4/6. In terms of biological role, bifunctional enzyme that catalyzes the enolization of 2,3-diketo-5-methylthiopentyl-1-phosphate (DK-MTP-1-P) into the intermediate 2-hydroxy-3-keto-5-methylthiopentenyl-1-phosphate (HK-MTPenyl-1-P), which is then dephosphorylated to form the acireductone 1,2-dihydroxy-3-keto-5-methylthiopentene (DHK-MTPene). In Shewanella amazonensis (strain ATCC BAA-1098 / SB2B), this protein is Enolase-phosphatase E1.